We begin with the raw amino-acid sequence, 697 residues long: SPX domain-containing membrane protein OsI_08463 (697 aa).

An SPX domain is found at 2-145 (VNFGKRLMAD…GYKFTDYYVS (144 aa)). 11 helical membrane passes run 247-267 (FMSLLLNLANTFLYMVNTYII), 278-298 (LGAAATVCGVIIGSMAVAQVF), 315-335 (LVFSSIMLFLGNLLYALAYDV), 338-356 (LTVLIVGRLLCGLGSARAV), 375-395 (AGFVSASALGMACGPALAGLL), 411-431 (LPGWIMCLAWITYLFWLWISF), 513-533 (LLIYFMLKFAMEILLSESSVV), 544-564 (TVAMFLAVLGLTVLPVNVIVG), 576-596 (ILVASEIMVLIGIAMSFRFTS), 604-624 (VSSALITFVFAEVLEGVNLSL), and 670-690 (LLNVTLLPSFVICVASIVATF).

It belongs to the major facilitator superfamily.

It is found in the membrane. This Oryza sativa subsp. indica (Rice) protein is SPX domain-containing membrane protein OsI_08463.